The chain runs to 480 residues: Ribulose bisphosphate carboxylase large chain (480 aa).

Positions Met1–Ser2 are excised as a propeptide. Pro3 carries the N-acetylproline modification. Lys14 is subject to N6,N6,N6-trimethyllysine. 2 residues coordinate substrate: Asn123 and Thr173. Residue Lys175 is the Proton acceptor of the active site. Lys177 provides a ligand contact to substrate. Residues Lys201, Asp203, and Glu204 each coordinate Mg(2+). Position 201 is an N6-carboxylysine (Lys201). His294 (proton acceptor) is an active-site residue. Positions 295, 327, and 379 each coordinate substrate.

This sequence belongs to the RuBisCO large chain family. Type I subfamily. Heterohexadecamer of 8 large chains and 8 small chains; disulfide-linked. The disulfide link is formed within the large subunit homodimers. It depends on Mg(2+) as a cofactor. In terms of processing, the disulfide bond which can form in the large chain dimeric partners within the hexadecamer appears to be associated with oxidative stress and protein turnover.

The protein localises to the plastid. Its subcellular location is the chloroplast. The enzyme catalyses 2 (2R)-3-phosphoglycerate + 2 H(+) = D-ribulose 1,5-bisphosphate + CO2 + H2O. The catalysed reaction is D-ribulose 1,5-bisphosphate + O2 = 2-phosphoglycolate + (2R)-3-phosphoglycerate + 2 H(+). Its function is as follows. RuBisCO catalyzes two reactions: the carboxylation of D-ribulose 1,5-bisphosphate, the primary event in carbon dioxide fixation, as well as the oxidative fragmentation of the pentose substrate in the photorespiration process. Both reactions occur simultaneously and in competition at the same active site. In Mollugo verticillata (Green carpetweed), this protein is Ribulose bisphosphate carboxylase large chain.